A 632-amino-acid chain; its full sequence is Chaperone protein HtpG (632 aa).

The interval 1-339 (MAHETMSFQA…SADLPLNVSR (339 aa)) is a; substrate-binding. Residues 340–559 (EILQESRDVK…DNDMSGYLQR (220 aa)) are b. Residues 560-632 (MLKAAGQNAP…TNALLLSRAA (73 aa)) are c.

The protein belongs to the heat shock protein 90 family. As to quaternary structure, homodimer.

It is found in the cytoplasm. Functionally, molecular chaperone. Has ATPase activity. The polypeptide is Chaperone protein HtpG (Burkholderia ambifaria (strain ATCC BAA-244 / DSM 16087 / CCUG 44356 / LMG 19182 / AMMD) (Burkholderia cepacia (strain AMMD))).